Here is a 289-residue protein sequence, read N- to C-terminus: Cbb3-type cytochrome c oxidase subunit FixP (289 aa).

Residues 1–33 (MADKHKHVDEVSGVETTGHEWDGIRELNNPMPR) are Cytoplasmic-facing. The helical transmembrane segment at 34 to 56 (WWVYSFYATIIWAIGYAIAYPSW) threads the bilayer. At 57–289 (PMLTEATKGM…VFVHSLGGGE (233 aa)) the chain is on the periplasmic side. 2 consecutive Cytochrome c domains span residues 110–198 (FAVS…VSLT) and 205–286 (HLVQ…HSLG). C123, C126, H127, M175, C218, C221, H222, and M263 together coordinate heme c.

Belongs to the CcoP / FixP family. Component of the cbb3-type cytochrome c oxidase at least composed of FixN, FixO, FixQ and FixP. Heme c is required as a cofactor.

The protein localises to the cell inner membrane. It participates in energy metabolism; oxidative phosphorylation. Functionally, C-type cytochrome. Part of the cbb3-type cytochrome c oxidase complex. FixP subunit is required for transferring electrons from donor cytochrome c via its heme groups to FixO subunit. From there, electrons are shuttled to the catalytic binuclear center of FixN subunit where oxygen reduction takes place. The complex also functions as a proton pump. In Rhizobium meliloti (strain 1021) (Ensifer meliloti), this protein is Cbb3-type cytochrome c oxidase subunit FixP.